We begin with the raw amino-acid sequence, 327 residues long: Ribonucleoside-diphosphate reductase small chain (327 aa).

The Fe cation site is built by Asp-70, Glu-101, and His-104. Residue Tyr-108 is part of the active site. Residues Glu-164, Glu-198, and His-201 each contribute to the Fe cation site.

The protein belongs to the ribonucleoside diphosphate reductase small chain family. As to quaternary structure, heterotetramer composed of a homodimer of the large subunit (R1) and a homodimer of the small subunit (R2). Larger multisubunit protein complex are also active, composed of (R1)n(R2)n. Fe cation serves as cofactor.

It catalyses the reaction a 2'-deoxyribonucleoside 5'-diphosphate + [thioredoxin]-disulfide + H2O = a ribonucleoside 5'-diphosphate + [thioredoxin]-dithiol. Its function is as follows. Ribonucleoside-diphosphate reductase holoenzyme provides the precursors necessary for viral DNA synthesis. Allows virus growth in non-dividing cells. Catalyzes the biosynthesis of deoxyribonucleotides from the corresponding ribonucleotides. The chain is Ribonucleoside-diphosphate reductase small chain from Ornithodoros (relapsing fever ticks).